Here is a 1176-residue protein sequence, read N- to C-terminus: Serine/threonine-protein kinase pakF (1176 aa).

Composition is skewed to low complexity over residues 1–19 (MSNL…ESSS) and 32–52 (NLLN…SGSN). Disordered regions lie at residues 1–231 (MSNL…HESR) and 254–361 (LPST…KKTK). A compositionally biased stretch (pro residues) spans 64–76 (QLPPNYTPPPPPH). A coiled-coil region spans residues 92–133 (LNNENSDNNNNNNNNNNNNNNNNNNNNNNNNNNNEQLARTES). Composition is skewed to low complexity over residues 93–125 (NNEN…NNNN), 133–148 (SSVS…SNSG), and 156–172 (SSNI…ETYS). Over residues 173–197 (MSPNQTLNSNIDSSEQQHQDLSSSV) the composition is skewed to polar residues. Low complexity predominate over residues 198–226 (NNNNNNNNNNNNNNNNNNNNNNNNNNNNN). The span at 254–289 (LPSTPTQQNVEIQTTNGGSSETSPNGLISPRPSNDQ) shows a compositional bias: polar residues. The span at 316–353 (SLSSSTTTPSTTSSLTSSPSSSSLAISSPNTTAATTTN) shows a compositional bias: low complexity. Residues 370-383 (ISVPYNVIHKMHVD) enclose the CRIB domain. The Protein kinase domain occupies 394–646 (FILDEKLGDG…PIDLLCHPFL (253 aa)). Residues 400-408 (LGDGAYGSV) and Lys-423 contribute to the ATP site. Asp-514 (proton acceptor) is an active-site residue. Disordered regions lie at residues 670–723 (IDDL…SDEL), 753–885 (QEEE…GNNL), 968–1083 (HTTS…TGRA), and 1112–1176 (NSNS…NIKK). Low complexity-rich tracts occupy residues 682-693 (SQSSSSSSPQSP) and 710-720 (SIISPIPSSPS). Acidic residues-rich tracts occupy residues 767-789 (DEQD…EDVD) and 813-844 (DQDD…DEEI). Residues 812–873 (SDQDDEEEDE…NKKKNKKNNL (62 aa)) adopt a coiled-coil conformation. The span at 852 to 870 (VRKKKNKSTKKSNKKKNKK) shows a compositional bias: basic residues. Composition is skewed to polar residues over residues 873 to 884 (LSTIGKSGSGNN) and 968 to 985 (HTTS…ATNL). 3 stretches are compositionally biased toward low complexity: residues 991-1044 (SSSP…RPNS), 1051-1066 (NNSS…SSSS), and 1148-1176 (SSGS…NIKK).

It belongs to the protein kinase superfamily. STE Ser/Thr protein kinase family. STE20 subfamily. It depends on Mg(2+) as a cofactor.

The catalysed reaction is L-seryl-[protein] + ATP = O-phospho-L-seryl-[protein] + ADP + H(+). It catalyses the reaction L-threonyl-[protein] + ATP = O-phospho-L-threonyl-[protein] + ADP + H(+). In Dictyostelium discoideum (Social amoeba), this protein is Serine/threonine-protein kinase pakF.